Reading from the N-terminus, the 305-residue chain is Glycine--tRNA ligase alpha subunit (305 aa).

Belongs to the class-II aminoacyl-tRNA synthetase family. Tetramer of two alpha and two beta subunits.

It is found in the cytoplasm. It carries out the reaction tRNA(Gly) + glycine + ATP = glycyl-tRNA(Gly) + AMP + diphosphate. The protein is Glycine--tRNA ligase alpha subunit of Ligilactobacillus salivarius (strain UCC118) (Lactobacillus salivarius).